A 101-amino-acid chain; its full sequence is NAD(P)H-quinone oxidoreductase subunit 4L, chloroplastic (101 aa).

3 helical membrane-spanning segments follow: residues 2 to 22 (IFQS…YGLL), 32 to 52 (MSLE…SNFV), and 61 to 81 (VLAL…LAII).

It belongs to the complex I subunit 4L family. As to quaternary structure, NDH is composed of at least 16 different subunits, 5 of which are encoded in the nucleus.

The protein localises to the plastid. It localises to the chloroplast thylakoid membrane. The enzyme catalyses a plastoquinone + NADH + (n+1) H(+)(in) = a plastoquinol + NAD(+) + n H(+)(out). It carries out the reaction a plastoquinone + NADPH + (n+1) H(+)(in) = a plastoquinol + NADP(+) + n H(+)(out). In terms of biological role, NDH shuttles electrons from NAD(P)H:plastoquinone, via FMN and iron-sulfur (Fe-S) centers, to quinones in the photosynthetic chain and possibly in a chloroplast respiratory chain. The immediate electron acceptor for the enzyme in this species is believed to be plastoquinone. Couples the redox reaction to proton translocation, and thus conserves the redox energy in a proton gradient. The protein is NAD(P)H-quinone oxidoreductase subunit 4L, chloroplastic of Nephroselmis olivacea (Green alga).